The sequence spans 211 residues: ATP phosphoribosyltransferase (211 aa).

The protein belongs to the ATP phosphoribosyltransferase family. Short subfamily. Heteromultimer composed of HisG and HisZ subunits.

It localises to the cytoplasm. The enzyme catalyses 1-(5-phospho-beta-D-ribosyl)-ATP + diphosphate = 5-phospho-alpha-D-ribose 1-diphosphate + ATP. The protein operates within amino-acid biosynthesis; L-histidine biosynthesis; L-histidine from 5-phospho-alpha-D-ribose 1-diphosphate: step 1/9. Its function is as follows. Catalyzes the condensation of ATP and 5-phosphoribose 1-diphosphate to form N'-(5'-phosphoribosyl)-ATP (PR-ATP). Has a crucial role in the pathway because the rate of histidine biosynthesis seems to be controlled primarily by regulation of HisG enzymatic activity. In Bacillus cereus (strain B4264), this protein is ATP phosphoribosyltransferase.